Here is a 282-residue protein sequence, read N- to C-terminus: MNKSLTEKISAFIITKNESTRVARAINSVKNITDEVIVVDSESTDDTVAIAEKLGAKVVIKPWLGYVGQKSFAESLCVNDWVLNIDADEELSKELQDEIEYIFASHNQDRYLAYQIKLLIMHRNDQKPRMFAPFNKCTRLYNKKFASFANTVNSTTHDSVIFNKDVDFAGKIYLLNEAAYHYSGTSIEQLVTKANFYSNEQAKDLVKQGKKLSNFRLTTEMIWWFFKAFFIRRYFVFGVDGFVDSIIFAFARFLRLTKLRESSLKSKNVIASDYKERGNFMK.

Belongs to the glycosyltransferase 2 family. WaaE/KdtX subfamily.

This is an uncharacterized protein from Rickettsia conorii (strain ATCC VR-613 / Malish 7).